A 313-amino-acid chain; its full sequence is 4-diphosphocytidyl-2-C-methyl-D-erythritol kinase (313 aa).

Residue lysine 10 is part of the active site. Residue 95–105 (PVTAGLGGGSS) coordinates ATP. Residue aspartate 136 is part of the active site. The tract at residues 289–313 (HPRVSPWRSPRSASSRSTRRSSRPT) is disordered. Over residues 292-304 (VSPWRSPRSASSR) the composition is skewed to low complexity.

Belongs to the GHMP kinase family. IspE subfamily.

It catalyses the reaction 4-CDP-2-C-methyl-D-erythritol + ATP = 4-CDP-2-C-methyl-D-erythritol 2-phosphate + ADP + H(+). It functions in the pathway isoprenoid biosynthesis; isopentenyl diphosphate biosynthesis via DXP pathway; isopentenyl diphosphate from 1-deoxy-D-xylulose 5-phosphate: step 3/6. Its function is as follows. Catalyzes the phosphorylation of the position 2 hydroxy group of 4-diphosphocytidyl-2C-methyl-D-erythritol. The sequence is that of 4-diphosphocytidyl-2-C-methyl-D-erythritol kinase from Anaeromyxobacter sp. (strain K).